Here is a 55-residue protein sequence, read N- to C-terminus: Large ribosomal subunit protein bL33 (55 aa).

This sequence belongs to the bacterial ribosomal protein bL33 family.

The sequence is that of Large ribosomal subunit protein bL33 from Sodalis glossinidius (strain morsitans).